A 669-amino-acid chain; its full sequence is Protein real-time (669 aa).

Residues 3–175 enclose the PRELI/MSF1 domain; that stretch reads QKFQSPVRVY…FINQLEQEGV (173 aa). The region spanning 284-460 is the CRAL-TRIO domain; sequence EPAVVVEHFP…FLGGPCKTMI (177 aa). The region spanning 522–641 is the GOLD domain; that stretch reads HQNLYKSVDL…QLNLFYEVLS (120 aa).

The protein resides in the mitochondrion. The chain is Protein real-time from Drosophila pseudoobscura pseudoobscura (Fruit fly).